An 830-amino-acid chain; its full sequence is MKLSRRDFMKANAAVAAAAAAGMTIPTVAKAVGETTNAIKWDKAPCRFCGTGCGVLVGTQNGRIVASQGDPDSPVNRGLNCIKGYFLPKIMYGKDRLTQPLLRMKDGQYDKEGDFTPISWEKAFDIMELKFKNALKEKGPTAVGMFGSGQWTVWEGYAALKLLKGGFRSNNLDPNARHCMASSVVGFMRTFGMDEPMGCYDDIEEADAFVLWGSNMAEMHPVLWSRMTSRRLTNAHVRIAVLSTYEHRSFELADNPIVFTPQTDLVIMNYIANYIIQNNAVDKDFLAQHVNFRRGATDIGYGLRPTHPLEKAAKNPGSDASEPMSFEDFKTFVAEYTLEKAAKMSGVPEDQLESLAQLYADPKVKLVSYWTMGFNQHTRGVWANNMCYNLHLLTGKISTPGSGPFSLTGQPSACGTAREVGTFSHRLPADMVVTNEKHRQIAETTWQLPAGTIPEKVGLHAVAQDRALKDGTLNAYWVMCNNNMQAGPNINEERMPGWRDPRNFIVVSDPYPTISALSADLILPTSMWVEKEGAYGNAERRTQFWRQQVPSPGEAKSDLWQIVEFAKRFNVEEVWPAELVNQKPEYRGKNLYEVLFANDVVSKYPLSEIPDDQLNDEARDFGFYIQKGLFEEYASFGRGHAHDLAPFDVYHQVRGLRWPVVDGKETLWRYREGFDPFVPKGEEVRFYGKPDGKAVIFALPYEPAAESPDQEYDLWLSTGRVLEHWHTGSMTRRVPELHRAFPEAVLFIHPLDAKARGLHRGDKVKVISRRGEVISLVETRGRNRPPRGLVYMPFFDAAQLVNNLTLDATDPLSKETDFKKCAVKLERVVA.

A signal peptide (tat-type signal) is located at residues 1 to 31 (MKLSRRDFMKANAAVAAAAAAGMTIPTVAKA). The 57-residue stretch at 39–95 (IKWDKAPCRFCGTGCGVLVGTQNGRIVASQGDPDSPVNRGLNCIKGYFLPKIMYGKD) folds into the 4Fe-4S Mo/W bis-MGD-type domain. [4Fe-4S] cluster is bound by residues Cys-46, Cys-49, Cys-53, and Cys-81. Mo-bis(molybdopterin guanine dinucleotide) is bound by residues Lys-83, Gln-150, Asn-175, Cys-179, 212 to 219 (WGSNMAEM), 243 to 247 (STYEH), 262 to 264 (QTD), Met-372, Gln-376, Asn-482, 508 to 509 (SD), Lys-531, Asp-558, and 718 to 727 (TGRVLEHWHT). Phe-794 contributes to the substrate binding site. Mo-bis(molybdopterin guanine dinucleotide) is bound by residues Asn-802 and Lys-819.

Belongs to the prokaryotic molybdopterin-containing oxidoreductase family. NasA/NapA/NarB subfamily. In terms of assembly, component of the periplasmic nitrate reductase NapAB complex composed of NapA and NapB. [4Fe-4S] cluster is required as a cofactor. Requires Mo-bis(molybdopterin guanine dinucleotide) as cofactor. Post-translationally, predicted to be exported by the Tat system. The position of the signal peptide cleavage has not been experimentally proven.

It is found in the periplasm. The enzyme catalyses 2 Fe(II)-[cytochrome] + nitrate + 2 H(+) = 2 Fe(III)-[cytochrome] + nitrite + H2O. Catalytic subunit of the periplasmic nitrate reductase complex NapAB. Receives electrons from NapB and catalyzes the reduction of nitrate to nitrite. This is Periplasmic nitrate reductase from Yersinia pestis bv. Antiqua (strain Antiqua).